Here is a 315-residue protein sequence, read N- to C-terminus: Acetyl-coenzyme A carboxylase carboxyl transferase subunit alpha (315 aa).

Residues 39-293 enclose the CoA carboxyltransferase C-terminal domain; that stretch reads RLQDKSSTLT…RGELASQLAM (255 aa).

Belongs to the AccA family. In terms of assembly, acetyl-CoA carboxylase is a heterohexamer composed of biotin carboxyl carrier protein (AccB), biotin carboxylase (AccC) and two subunits each of ACCase subunit alpha (AccA) and ACCase subunit beta (AccD).

The protein resides in the cytoplasm. The catalysed reaction is N(6)-carboxybiotinyl-L-lysyl-[protein] + acetyl-CoA = N(6)-biotinyl-L-lysyl-[protein] + malonyl-CoA. Its pathway is lipid metabolism; malonyl-CoA biosynthesis; malonyl-CoA from acetyl-CoA: step 1/1. Component of the acetyl coenzyme A carboxylase (ACC) complex. First, biotin carboxylase catalyzes the carboxylation of biotin on its carrier protein (BCCP) and then the CO(2) group is transferred by the carboxyltransferase to acetyl-CoA to form malonyl-CoA. The chain is Acetyl-coenzyme A carboxylase carboxyl transferase subunit alpha from Pseudomonas fluorescens (strain SBW25).